Consider the following 344-residue polypeptide: Deoxyhypusine hydroxylase (344 aa).

HEAT-like PBS-type repeat units lie at residues 81 to 107 and 115 to 140; these read LKHE…VLED and RHEA…FRDR. Positions 83, 84, 116, and 117 each coordinate Fe cation. The tract at residues 169-188 is disordered; the sequence is EKLRASDFSSVDPAPPTAQG. HEAT-like PBS-type repeat units lie at residues 210–240, 248–274, and 281–308; these read KRYR…LAKG, FRHE…ALSN, and VRHE…FLHD. Residues H250, E251, H283, and E284 each coordinate Fe cation.

This sequence belongs to the deoxyhypusine hydroxylase family. It depends on Fe(2+) as a cofactor.

The protein localises to the cytoplasm. It is found in the nucleus. It catalyses the reaction [eIF5A protein]-deoxyhypusine + AH2 + O2 = [eIF5A protein]-hypusine + A + H2O. It functions in the pathway protein modification; eIF5A hypusination. In terms of biological role, catalyzes the hydroxylation of the N(6)-(4-aminobutyl)-L-lysine intermediate to form hypusine, an essential post-translational modification only found in mature eIF-5A factor. The chain is Deoxyhypusine hydroxylase from Chaetomium globosum (strain ATCC 6205 / CBS 148.51 / DSM 1962 / NBRC 6347 / NRRL 1970) (Soil fungus).